Here is a 530-residue protein sequence, read N- to C-terminus: Metal transporter Nramp5 (530 aa).

Over residues 1-10 (MTGSTVSRQE) the composition is skewed to polar residues. The interval 1–53 (MTGSTVSRQENSPKRPNDSNGEFKRLLVPETSQPEEDELHESPPENQILNVEE) is disordered. Positions 11 to 27 (NSPKRPNDSNGEFKRLL) are enriched in basic and acidic residues. 12 helical membrane passes run 65–85 (FSWA…IAFL), 98–118 (AVAG…GLLM), 147–167 (ILLW…EVIG), 179–199 (FLPI…ISYL), 207–227 (LEGL…WMFN), 253–273 (AVGV…SALV), 299–319 (AALF…AKGF), 341–361 (YGGG…AAGQ), 387–407 (LSAF…AIMF), 429–449 (IPFA…MGVF), 458–478 (LAWT…LDFF), and 485–505 (FLVG…IIYL).

This sequence belongs to the NRAMP (TC 2.A.55) family.

Its subcellular location is the membrane. Functionally, seems to be involved in iron uptake. The sequence is that of Metal transporter Nramp5 (NRAMP5) from Arabidopsis thaliana (Mouse-ear cress).